We begin with the raw amino-acid sequence, 437 residues long: GTPase Obg (437 aa).

The Obg domain maps to 2–160 (SMFLDTAKIS…RQLELELKIL (159 aa)). The region spanning 161–338 (ADVGLVGFPS…LLEATAELLA (178 aa)) is the OBG-type G domain. Residues 167–174 (GFPSVGKS), 192–196 (FTTIV), 214–217 (DLPG), 284–287 (NKMD), and 319–321 (SSL) contribute to the GTP site. Residues serine 174 and threonine 194 each coordinate Mg(2+). One can recognise an OCT domain in the interval 359-437 (GFAEAEKEFE…IGKFEFEFVD (79 aa)).

It belongs to the TRAFAC class OBG-HflX-like GTPase superfamily. OBG GTPase family. In terms of assembly, monomer. It depends on Mg(2+) as a cofactor.

The protein localises to the cytoplasm. In terms of biological role, an essential GTPase which binds GTP, GDP and possibly (p)ppGpp with moderate affinity, with high nucleotide exchange rates and a fairly low GTP hydrolysis rate. Plays a role in control of the cell cycle, stress response, ribosome biogenesis and in those bacteria that undergo differentiation, in morphogenesis control. The chain is GTPase Obg from Streptococcus pyogenes serotype M3 (strain ATCC BAA-595 / MGAS315).